The primary structure comprises 122 residues: MIQMQSNLDVADNSGAKRVQCIKVLGGSKRRFAGVGDIIVVSVKEAQPRARVKKGDVHRAVIVRTKKDVRRTDGSVIRFDSNAAVLVGKNEEPIGTRIFGPVVRELRGKGFMKIISLAPEVL.

The protein belongs to the universal ribosomal protein uL14 family. In terms of assembly, part of the 50S ribosomal subunit. Forms a cluster with proteins L3 and L19. In the 70S ribosome, L14 and L19 interact and together make contacts with the 16S rRNA in bridges B5 and B8.

Functionally, binds to 23S rRNA. Forms part of two intersubunit bridges in the 70S ribosome. The polypeptide is Large ribosomal subunit protein uL14 (Novosphingobium aromaticivorans (strain ATCC 700278 / DSM 12444 / CCUG 56034 / CIP 105152 / NBRC 16084 / F199)).